We begin with the raw amino-acid sequence, 813 residues long: Tax1-binding protein 1 homolog (813 aa).

Serine 124, serine 138, and serine 225 each carry phosphoserine. Residues 144 to 596 (TTKAGLLELK…SYSLQLAEKD (453 aa)) are a coiled coil. Residues 320–420 (EEIGKLQSCL…ELQLHAVKTD (101 aa)) are oligomerization. Serine 618 is modified (phosphoserine; by IKKA). At serine 631 the chain carries Phosphoserine. The tract at residues 667 to 732 (AHETRDGADG…NVPIPPDPAN (66 aa)) is disordered. Residue serine 692 is modified to Phosphoserine; by IKKA. UBZ1-type zinc fingers lie at residues 751-777 (HKKCPLCELMFPPNYDQIKFEEHVESH) and 778-804 (WKVCPMCSEQFPPDYDQQGFERHVQTH). Residues cysteine 754, cysteine 757, histidine 773, histidine 777, cysteine 781, cysteine 784, histidine 800, and histidine 804 each contribute to the Zn(2+) site.

In terms of assembly, homooligomer. Interacts with TNFAIP3. Interacts with STARD13. Interacts with MYO6. Interacts with TOM1; the interaction is indirect and is mediated by MYO6, which acts as a bridge between TOM1 and TAX1BP1. Interacts with MAVS; this interaction induces MAVS polyubiquitination. Interacts with TNIP1. Interacts with TRAF6; this interaction mediates deubiquitination of TRAF6 and inhibition of NF-kappa-B activation. Interacts with RIPK1; this interaction negatively regulates RIPK1 ubiquitination. Interacts with NBR1. Interacts with TBK1. Interacts with RB1CC1. Interacts with SQSTM1. Interacts with AZI2. Interacts with TICAM1 and TRIM32; these interactions target TICAM1 to TAX1BP1-mediated selective autophagic degradation. Phosphorylated in the C-terminal region by CHUK/IKKA leading to NF-kappa-B signaling down-regulation.

It localises to the cytoplasm. It is found in the mitochondrion. The protein localises to the preautophagosomal structure. Its subcellular location is the cytoplasmic vesicle. The protein resides in the autophagosome. Its function is as follows. Ubiquitin-binding adapter that participates in inflammatory, antiviral and innate immune processes as well as selective autophagy regulation. Plays a key role in the negative regulation of NF-kappa-B and IRF3 signalings by acting as an adapter for the ubiquitin-editing enzyme A20/TNFAIP3 to bind and inactivate its substrates. Disrupts the interactions between the E3 ubiquitin ligase TRAF3 and TBK1/IKBKE to attenuate 'Lys63'-linked polyubiquitination of TBK1 and thereby IFN-beta production. Also recruits A20/TNFAIP3 to ubiquitinated signaling proteins TRAF6 and RIPK1, leading to their deubiquitination and disruption of IL-1 and TNF-induced NF-kappa-B signaling pathways. Inhibits virus-induced apoptosis by inducing the 'Lys-48'-linked polyubiquitination and degradation of MAVS via recruitment of the E3 ligase ITCH, thereby attenuating MAVS-mediated apoptosis signaling. As a macroautophagy/autophagy receptor, facilitates the xenophagic clearance of pathogenic bacteria such as Salmonella typhimurium and Mycobacterium tuberculosis. Upon NBR1 recruitment to the SQSTM1-ubiquitin condensates, acts as the major recruiter of RB1CC1 to these ubiquitin condensates to promote their autophagic degradation. Mediates the autophagic degradation of other substrates including TICAM1. The sequence is that of Tax1-binding protein 1 homolog (Tax1bp1) from Rattus norvegicus (Rat).